The sequence spans 197 residues: Ribosome maturation factor RimP (197 aa).

The protein belongs to the RimP family.

The protein localises to the cytoplasm. In terms of biological role, required for maturation of 30S ribosomal subunits. The polypeptide is Ribosome maturation factor RimP (Acidovorax sp. (strain JS42)).